Reading from the N-terminus, the 293-residue chain is uncharacterized protein (293 aa).

One can recognise an HTH lysR-type domain in the interval 1-58 (MQLQELHMLVVLAEELNMRKAAERLFVSQPALSQRLQTIEKAWGTKIFLRSQKGLTVT). A DNA-binding region (H-T-H motif) is located at residues 18 to 37 (MRKAAERLFVSQPALSQRLQ).

This sequence belongs to the LysR transcriptional regulatory family.

This is an uncharacterized protein from Bacillus subtilis (strain 168).